Consider the following 88-residue polypeptide: Small ribosomal subunit protein bS16c (88 aa).

This sequence belongs to the bacterial ribosomal protein bS16 family.

The protein resides in the plastid. The protein localises to the chloroplast. The sequence is that of Small ribosomal subunit protein bS16c from Gossypium barbadense (Sea Island cotton).